An 89-amino-acid polypeptide reads, in one-letter code: Small ribosomal subunit protein uS15 (89 aa).

This sequence belongs to the universal ribosomal protein uS15 family. Part of the 30S ribosomal subunit. Forms a bridge to the 50S subunit in the 70S ribosome, contacting the 23S rRNA.

One of the primary rRNA binding proteins, it binds directly to 16S rRNA where it helps nucleate assembly of the platform of the 30S subunit by binding and bridging several RNA helices of the 16S rRNA. In terms of biological role, forms an intersubunit bridge (bridge B4) with the 23S rRNA of the 50S subunit in the ribosome. In Oceanobacillus iheyensis (strain DSM 14371 / CIP 107618 / JCM 11309 / KCTC 3954 / HTE831), this protein is Small ribosomal subunit protein uS15.